A 37-amino-acid chain; its full sequence is Large ribosomal subunit protein bL36B (37 aa).

Belongs to the bacterial ribosomal protein bL36 family.

This is Large ribosomal subunit protein bL36B from Aeromonas salmonicida (strain A449).